Here is a 191-residue protein sequence, read N- to C-terminus: Large ribosomal subunit protein bL9 (191 aa).

The interval 151 to 191 (AERQAKGESLTSADAIYGVDEDALKPEDFFNPEAEIESEEE) is disordered.

It belongs to the bacterial ribosomal protein bL9 family.

In terms of biological role, binds to the 23S rRNA. In Sinorhizobium medicae (strain WSM419) (Ensifer medicae), this protein is Large ribosomal subunit protein bL9.